A 244-amino-acid chain; its full sequence is Venom nerve growth factor 1 (244 aa).

The first 18 residues, 1-18 (MSMLCYTLIIAFLIGIWA), serve as a signal peptide directing secretion. Residues 19–125 (APKSEDNVPL…TLNRNIRAKR (107 aa)) constitute a propeptide that is removed on maturation. The segment covering 47–66 (GLKTSRNTDQRHPAPKKAED) has biased composition (basic and acidic residues). A disordered region spans residues 47-67 (GLKTSRNTDQRHPAPKKAEDQ). 3 disulfide bridges follow: cysteine 139-cysteine 205, cysteine 181-cysteine 233, and cysteine 193-cysteine 235.

Belongs to the NGF-beta family. Homodimer; non-covalently linked. Expressed by the venom gland.

Its subcellular location is the secreted. Nerve growth factor is important for the development and maintenance of the sympathetic and sensory nervous systems. It stimulates division and differentiation of sympathetic and embryonic sensory neurons as well as basal forebrain cholinergic neurons in the brain. Its relevance in the snake venom is not clear. However, it has been shown to inhibit metalloproteinase-dependent proteolysis of platelet glycoprotein Ib alpha, suggesting a metalloproteinase inhibition to prevent metalloprotease autodigestion and/or protection against prey proteases. Binds a lipid between the two protein chains in the homodimer. The lipid-bound form promotes histamine relase from mouse mast cells, contrary to the lipid-free form. This chain is Venom nerve growth factor 1, found in Notechis scutatus scutatus (Mainland tiger snake).